A 428-amino-acid chain; its full sequence is E3 ubiquitin-protein ligase RNF128 (428 aa).

The N-terminal stretch at 1–38 is a signal peptide; sequence MGPPLGAGVSCRGGCGSSRLLAWCFLLALSPQAPGSRG. Residues N48, N59, and N101 are each glycosylated (N-linked (GlcNAc...) asparagine). The 109-residue stretch at 75-183 folds into the PA domain; it reads SPLEPVAGVL…LKGTKILQSI (109 aa). Residues 208-228 traverse the membrane as a helical segment; that stretch reads IFFVSVSFFIITAATVGYFIF. Residues 277 to 318 form an RING-type; atypical zinc finger; sequence CAVCIELYKPNDLVRILTCNHIFHKTCVDPWLLEHRTCPMCK. The segment at 346-428 is disordered; it reads ISNSASSHEE…QETAVREIKS (83 aa). The span at 416 to 428 shows a compositional bias: basic and acidic residues; that stretch reads TPHQETAVREIKS.

Post-translationally, auto-ubiquitinated. Controls the development of T-cell clonal anergy by ubiquitination.

It localises to the cytoplasm. The protein localises to the endomembrane system. Its subcellular location is the cytoskeleton. It is found in the perinuclear region. It catalyses the reaction S-ubiquitinyl-[E2 ubiquitin-conjugating enzyme]-L-cysteine + [acceptor protein]-L-lysine = [E2 ubiquitin-conjugating enzyme]-L-cysteine + N(6)-ubiquitinyl-[acceptor protein]-L-lysine.. It functions in the pathway protein modification; protein ubiquitination. Its function is as follows. E3 ubiquitin-protein ligase that catalyzes 'Lys-27', 'Lys-48'- or 'Lys-63'-linked polyubiquitin chains formation and plays a role in different biological processes such as modulation of immune response, cytoskeletal dynamics or protein homeostasis. Inhibits IL2 and IL4 transcription, thereby playing an important role in the induction of the anergic phenotype, a long-term stable state of T-lymphocyte unresponsiveness to antigenic stimulation associated with the blockade of interleukin production. Ubiquitinates ARPC5 with 'Lys-48' linkages and COR1A with 'Lys-63' linkages leading to their degradation, down-regulation of these cytoskeletal components results in impaired lamellipodium formation and reduced accumulation of F-actin at the immunological synapse. Functions in the patterning of the dorsal ectoderm; sensitizes ectoderm to respond to neural-inducing signals. Plays a positive role in innate immune response by promoting 'Lys-63'-linked ubiquitination of TBK1 after RNA- or DNA-virus infection. Regulates alveolar macrophage activation and neutrophil infiltration by interacting with TLR4, targeting it for degradation, and inhibiting NF-kappa-B activation, hence decreasing pro-inflammatory cytokines. Negatively regulates the IL-3/STAT5 signaling pathway by facilitating 'Lys-27'-linked polyubiquitination of IL3RA leading to its degradation via lysosomal pathway. Directly regulates the N-glycosylation process in the endoplasmic reticulum by targeting the glycosyl-transferase RPN1 for ubiquitination and degradation. Other substrates targeted for degradation by RNF128 include transmembrane proteins CD40L, CD83 or the tetraspanin CD151. This is E3 ubiquitin-protein ligase RNF128 (RNF128) from Pongo abelii (Sumatran orangutan).